A 444-amino-acid chain; its full sequence is UDP-N-acetylmuramate--L-alanine ligase (444 aa).

110–116 (GAHGKTS) contacts ATP.

It belongs to the MurCDEF family.

The protein localises to the cytoplasm. It catalyses the reaction UDP-N-acetyl-alpha-D-muramate + L-alanine + ATP = UDP-N-acetyl-alpha-D-muramoyl-L-alanine + ADP + phosphate + H(+). The protein operates within cell wall biogenesis; peptidoglycan biosynthesis. Its function is as follows. Cell wall formation. This chain is UDP-N-acetylmuramate--L-alanine ligase, found in Streptococcus pneumoniae (strain Hungary19A-6).